Here is a 736-residue protein sequence, read N- to C-terminus: Catalase-peroxidase (736 aa).

Positions 100 to 223 (WHSAGTYRIG…LAAVQMGLIY (124 aa)) form a cross-link, tryptophyl-tyrosyl-methioninium (Trp-Tyr) (with M-249). Histidine 101 functions as the Proton acceptor in the catalytic mechanism. The tryptophyl-tyrosyl-methioninium (Tyr-Met) (with W-100) cross-link spans 223–249 (YVNPEGPDGKPDPVAAARDIRETFRRM). Histidine 264 provides a ligand contact to heme b.

It belongs to the peroxidase family. Peroxidase/catalase subfamily. In terms of assembly, homodimer or homotetramer. It depends on heme b as a cofactor. Formation of the three residue Trp-Tyr-Met cross-link is important for the catalase, but not the peroxidase activity of the enzyme.

The catalysed reaction is H2O2 + AH2 = A + 2 H2O. The enzyme catalyses 2 H2O2 = O2 + 2 H2O. In terms of biological role, bifunctional enzyme with both catalase and broad-spectrum peroxidase activity. This chain is Catalase-peroxidase, found in Geobacillus kaustophilus (strain HTA426).